We begin with the raw amino-acid sequence, 80 residues long: Large ribosomal subunit protein eL38 (80 aa).

The protein belongs to the eukaryotic ribosomal protein eL38 family. Component of the large ribosomal subunit (LSU). Mature N.crassa ribosomes consist of a small (40S) and a large (60S) subunit. The 40S small subunit contains 1 molecule of ribosomal RNA (18S rRNA) and at least 32 different proteins. The large 60S subunit contains 3 rRNA molecules (26S, 5.8S and 5S rRNA) and at least 42 different proteins.

The protein localises to the cytoplasm. Component of the ribosome, a large ribonucleoprotein complex responsible for the synthesis of proteins in the cell. The small ribosomal subunit (SSU) binds messenger RNAs (mRNAs) and translates the encoded message by selecting cognate aminoacyl-transfer RNA (tRNA) molecules. The large subunit (LSU) contains the ribosomal catalytic site termed the peptidyl transferase center (PTC), which catalyzes the formation of peptide bonds, thereby polymerizing the amino acids delivered by tRNAs into a polypeptide chain. The nascent polypeptides leave the ribosome through a tunnel in the LSU and interact with protein factors that function in enzymatic processing, targeting, and the membrane insertion of nascent chains at the exit of the ribosomal tunnel. This chain is Large ribosomal subunit protein eL38 (rpl-38), found in Neurospora crassa (strain ATCC 24698 / 74-OR23-1A / CBS 708.71 / DSM 1257 / FGSC 987).